The sequence spans 353 residues: E3 ubiquitin-protein ligase Os03g0188200 (353 aa).

Residues 48 to 68 form a helical membrane-spanning segment; that stretch reads VVVLVALITAFVLLTVFSVLI. The RING-type; atypical zinc-finger motif lies at 133–175; the sequence is CAVCLAEFADSDELRVLPACCHVFHPDCIDPWLAAAVTCPLCR. 2 stretches are compositionally biased toward basic and acidic residues: residues 308-318 and 340-353; these read ADWDAGEEHGG and GSKE…LNRV. A disordered region spans residues 308–353; sequence ADWDAGEEHGGSKRVHPVAGAQDETPSGSGSDGSKENSDSDALNRV.

Its subcellular location is the membrane. The catalysed reaction is S-ubiquitinyl-[E2 ubiquitin-conjugating enzyme]-L-cysteine + [acceptor protein]-L-lysine = [E2 ubiquitin-conjugating enzyme]-L-cysteine + N(6)-ubiquitinyl-[acceptor protein]-L-lysine.. It functions in the pathway protein modification; protein ubiquitination. In terms of biological role, possesses E3 ubiquitin-protein ligase in vitro. This Oryza sativa subsp. japonica (Rice) protein is E3 ubiquitin-protein ligase Os03g0188200.